Here is a 4678-residue protein sequence, read N- to C-terminus: E3 ubiquitin-protein ligase MYCBP2 (4678 aa).

3 disordered regions span residues 87 to 127 (DRDQ…RSKS), 172 to 192 (SKNS…SKEP), and 609 to 628 (ASKG…KPYK). The segment covering 100 to 124 (SRNKKILNKKKLKRKQKSKSKVKTR) has biased composition (basic residues). A phosphoserine mark is found at Ser-127, Ser-178, Ser-181, and Ser-183. RCC1 repeat units follow at residues 600 to 655 (DGSI…VISK), 699 to 755 (NGEV…MMCP), 907 to 957 (KRDK…VLME), 958 to 1008 (NGDV…VLLM), and 1010 to 1066 (GQVF…LRID). The span at 898-910 (RSHPAQLKHKRDK) shows a compositional bias: basic residues. The disordered stretch occupies residues 898–928 (RSHPAQLKHKRDKHKDGSGERGEKDASKITT). Residues 911–924 (HKDGSGERGEKDAS) show a composition bias toward basic and acidic residues. The tract at residues 1235-1386 (NRFESHGGGW…GQIPQLLYRL (152 aa)) is PHR domain 1. Ser-1624 bears the Phosphoserine mark. The tract at residues 1726–1884 (NRFTKTSQGR…GQIPQILYYR (159 aa)) is PHR domain 2. Cysteines 1748 and 1863 form a disulfide. 2 disordered regions span residues 1993–2012 (FNPN…QGLS) and 2321–2340 (QQDQ…VTAA). Residues 1994–2012 (NPNQSTDSTTGNQPEQGLS) are compositionally biased toward polar residues. Positions 2022–2550 (VIESEHPYKP…NQHLGKSLLV (529 aa)) are RAE1 binding. The stretch at 2341–2443 (SSNTDMTYGG…IDAGLEVKVK (103 aa)) is one Filamin repeat. Phosphothreonine is present on Thr-2683. Disordered stretches follow at residues 2709–2931 (LGNS…LHSE), 2943–2963 (TNSL…VDEG), 2979–3020 (EQEM…EPAK), and 3066–3085 (APIR…ETKL). Residues 2718–2733 (NISTSSKPASTSGKSE) show a composition bias toward polar residues. A compositionally biased stretch (basic and acidic residues) spans 2742–2760 (LKPDGRMSRTTADQKKPRG). At Ser-2769 the chain carries Phosphoserine. The span at 2775–2785 (DAAKLRSDSHS) shows a compositional bias: basic and acidic residues. A compositionally biased stretch (polar residues) spans 2786–2810 (RSLSPNHNTLQTLKSDGRMPSSSRA). Ser-2787, Ser-2789, Ser-2833, Ser-2839, Ser-2869, Ser-2871, and Ser-2920 each carry phosphoserine. Positions 2828–2843 (PANRSSPSGASSPRSS) are enriched in low complexity. The segment covering 2860–2871 (TKLDPPRERSKS) has biased composition (basic and acidic residues). The residue at position 2985 (Ser-2985) is a Phosphoserine. Residues 2988-3001 (ISRKCANRHTRPKK) show a composition bias toward basic residues. Ser-3090, Ser-3478, and Ser-3505 each carry phosphoserine. The segment at 3605 to 3631 (PVEPEEEEDEENKTSKENSEQEKDTRV) is disordered. The span at 3616–3631 (NKTSKENSEQEKDTRV) shows a compositional bias: basic and acidic residues. The DOC domain maps to 3719–3897 (SISIQSGFEA…VAQQRNCEAE (179 aa)). Residues 3915–3934 (SGDAEPTPEQEEKALLSSPE) are disordered. At Thr-3921 the chain carries Phosphothreonine. A phosphoserine mark is found at Ser-3931 and Ser-3932. 10 residues coordinate Zn(2+): Cys-4428, Cys-4431, Cys-4446, His-4448, His-4451, Cys-4454, Cys-4475, Cys-4478, Cys-4544, and Cys-4547. Residues 4428 to 4479 (CMICFTEALSAAPAIQLDCSHIFHLQCCRRVLENRWLGPRITFGFISCPICK) form an RING-type; atypical zinc finger. A tandem cysteine domain region spans residues 4539–4676 (YAYYVCYKCR…LGCGVCRNAH (138 aa)). Cys-4558 is an active-site residue. Residues Cys-4575, Cys-4578, Cys-4587, His-4590, Cys-4599, Cys-4602, and Cys-4603 each contribute to the Zn(2+) site. The active site involves Cys-4610. Positions 4617, 4620, 4638, 4652, 4658, 4669, and 4672 each coordinate Zn(2+).

This sequence belongs to the RING-Cys relay (RCR) family. As to quaternary structure, interacts with MYC. Interacts with TSC2 (tuberin) when TSC2 is in complex with TSC1 (hamartin). Interacts with FBXO45. Interacts with RAE1. Interacts with CPNE1 (via VWFA domain) and CPNE4 (via VWFA domain). Interacts with (sumoylated) RANGAP1; interaction with sumoylated RANGAP1 inhibits E3 ubiquitin-protein ligase activity and promotes MYCBP2 translocation to the nucleus. Interacts with RAN. Interacts with ATP13A2; the interaction inhibits the ubiquitination of TSC2 by MYCBP2. Interacts with USP11. Post-translationally, autoubiquitinated. Expressed in all tissues examined, expression is exceptionally abundant in brain and thymus. Colocalizes with TSC1 and TSC2 along the neurites and in the growth cones. Highly expressed in peripheral and central neurons. Colocalized with TSC1 in one of the filopodial extensions at the tip of a growth cone.

The protein localises to the nucleus. The protein resides in the cell projection. It is found in the axon. Its subcellular location is the cytoplasm. It localises to the cytoskeleton. The catalysed reaction is [E2 ubiquitin-conjugating enzyme]-S-ubiquitinyl-L-cysteine + [acceptor protein]-L-threonine = [E2 ubiquitin-conjugating enzyme]-L-cysteine + [acceptor protein]-3-O-ubiquitinyl-L-threonine.. The protein operates within protein modification; protein ubiquitination. Atypical E3 ubiquitin-protein ligase which specifically mediates ubiquitination of threonine and serine residues on target proteins, instead of ubiquitinating lysine residues. Shows esterification activity towards both threonine and serine, with a preference for threonine, and acts via two essential catalytic cysteine residues that relay ubiquitin to its substrate via thioester intermediates. Interacts with the E2 enzymes UBE2D1, UBE2D3, UBE2E1 and UBE2L3. Plays a key role in neural development, probably by mediating ubiquitination of threonine residues on target proteins. Involved in different processes such as regulation of neurite outgrowth, synaptic growth, synaptogenesis and axon degeneration. Required for the formation of major central nervous system axon tracts. Required for proper axon growth by regulating axon navigation and axon branching: acts by regulating the subcellular location and stability of MAP3K12/DLK. Required for proper localization of retinogeniculate projections but not for eye-specific segregation. Regulates axon guidance in the olfactory system. Involved in Wallerian axon degeneration, an evolutionarily conserved process that drives the loss of damaged axons: acts by promoting destabilization of NMNAT2, probably via ubiquitination of NMNAT2. Catalyzes ubiquitination of threonine and/or serine residues on NMNAT2, consequences of threonine and/or serine ubiquitination are however unknown. Regulates the internalization of TRPV1 in peripheral sensory neurons. Mediates ubiquitination and subsequent proteasomal degradation of TSC2/tuberin. Independently of the E3 ubiquitin-protein ligase activity, also acts as a guanosine exchange factor (GEF) for RAN in neurons of dorsal root ganglia. May function as a facilitator or regulator of transcriptional activation by MYC. Acts in concert with HUWE1 to regulate the circadian clock gene expression by promoting the lithium-induced ubiquination and degradation of NR1D1. The sequence is that of E3 ubiquitin-protein ligase MYCBP2 from Homo sapiens (Human).